Here is a 185-residue protein sequence, read N- to C-terminus: uncharacterized protein (185 aa).

The 121-residue stretch at 17–137 (GKSSIMNALF…QKPIIVVINK (121 aa)) folds into the G domain.

This is an uncharacterized protein from Methanocaldococcus jannaschii (strain ATCC 43067 / DSM 2661 / JAL-1 / JCM 10045 / NBRC 100440) (Methanococcus jannaschii).